The sequence spans 278 residues: NAD-capped RNA hydrolase NudC (278 aa).

Arg84 serves as a coordination point for substrate. Zn(2+) contacts are provided by Cys114 and Cys117. Residue Glu127 coordinates substrate. A Zn(2+)-binding site is contributed by Cys132. Residue Tyr140 participates in substrate binding. Residues 141–264 (PRISPSMIVL…SIARYLIEAY (124 aa)) enclose the Nudix hydrolase domain. Positions 174, 190, and 194 each coordinate a divalent metal cation. The Nudix box motif lies at 175–196 (GFVEPGESAEDCVHREVMEEVQ). Residue 208-215 (QCWPFPHS) coordinates substrate. Glu235 provides a ligand contact to a divalent metal cation. Ala257 lines the substrate pocket.

Belongs to the Nudix hydrolase family. NudC subfamily. As to quaternary structure, homodimer. The cofactor is Mg(2+). Mn(2+) is required as a cofactor. Requires Zn(2+) as cofactor.

It carries out the reaction a 5'-end NAD(+)-phospho-ribonucleoside in mRNA + H2O = a 5'-end phospho-adenosine-phospho-ribonucleoside in mRNA + beta-nicotinamide D-ribonucleotide + 2 H(+). The enzyme catalyses NAD(+) + H2O = beta-nicotinamide D-ribonucleotide + AMP + 2 H(+). It catalyses the reaction NADH + H2O = reduced beta-nicotinamide D-ribonucleotide + AMP + 2 H(+). MRNA decapping enzyme that specifically removes the nicotinamide adenine dinucleotide (NAD) cap from a subset of mRNAs by hydrolyzing the diphosphate linkage to produce nicotinamide mononucleotide (NMN) and 5' monophosphate mRNA. The NAD-cap is present at the 5'-end of some mRNAs and stabilizes RNA against 5'-processing. Has preference for mRNAs with a 5'-end purine. Catalyzes the hydrolysis of a broad range of dinucleotide pyrophosphates. The chain is NAD-capped RNA hydrolase NudC from Pseudomonas syringae pv. tomato (strain ATCC BAA-871 / DC3000).